Consider the following 250-residue polypeptide: uncharacterized protein (250 aa).

Disordered stretches follow at residues 85–107 and 158–198; these read NQFP…QSEP and EPVP…AKVP. Residues 167–176 are compositionally biased toward low complexity; it reads PAVEQPQVKQ.

This is an uncharacterized protein from Mycoplasma pneumoniae (strain ATCC 29342 / M129 / Subtype 1) (Mycoplasmoides pneumoniae).